Here is a 483-residue protein sequence, read N- to C-terminus: Altronate oxidoreductase (483 aa).

An NAD(+)-binding site is contributed by 18 to 29 (IIQFGEGNFLRA).

It belongs to the mannitol dehydrogenase family. UxaB subfamily.

It catalyses the reaction D-altronate + NAD(+) = keto-D-tagaturonate + NADH + H(+). It participates in carbohydrate metabolism; pentose and glucuronate interconversion. The polypeptide is Altronate oxidoreductase (Yersinia enterocolitica serotype O:8 / biotype 1B (strain NCTC 13174 / 8081)).